Consider the following 378-residue polypeptide: Opsin Rh4 (378 aa).

Topologically, residues Met1–Met53 are extracellular. N-linked (GlcNAc...) asparagine glycosylation is present at Asn6. The chain crosses the membrane as a helical span at residues His54–Ile78. At Phe79–Asn90 the chain is on the cytoplasmic side. A helical transmembrane segment spans residues Met91–Ile111. The Extracellular segment spans residues Tyr112–Gln127. Cys126 and Cys203 are oxidised to a cystine. A helical transmembrane segment spans residues Ile128–Gly148. The Cytoplasmic segment spans residues Tyr149–Lys167. Residues Ala168–Asp192 traverse the membrane as a helical segment. Residues Arg193–Leu216 are Extracellular-facing. The chain crosses the membrane as a helical span at residues Phe217–Val244. Topologically, residues Phe245–Lys280 are cytoplasmic. The chain crosses the membrane as a helical span at residues Ala281–Ala304. The Extracellular portion of the chain corresponds to Phe305–Thr312. The helical transmembrane segment at Pro313–Ser337 threads the bilayer. N6-(retinylidene)lysine is present on Lys324. The Cytoplasmic segment spans residues His338 to Ala378.

It belongs to the G-protein coupled receptor 1 family. Opsin subfamily. Post-translationally, phosphorylated on some or all of the serine and threonine residues present in the C-terminal region.

The protein localises to the membrane. In terms of biological role, visual pigments are the light-absorbing molecules that mediate vision. They consist of an apoprotein, opsin, covalently linked to cis-retinal. The polypeptide is Opsin Rh4 (Rh4) (Drosophila melanogaster (Fruit fly)).